Reading from the N-terminus, the 77-residue chain is MLTPAVFPAVLYLLALVVWVEMFCLVAVAVVEREIAWALLLRMLVVGLMVEVGAAAAWTFVRCLAYQRSFPVLTAFP.

2 helical membrane-spanning segments follow: residues 10–30 and 35–55; these read VLYLLALVVWVEMFCLVAVAV and IAWALLLRMLVVGLMVEVGAA.

Its subcellular location is the host membrane. This chain is Protein UL148C (UL148C), found in Homo sapiens (Human).